Here is a 1238-residue protein sequence, read N- to C-terminus: MVRPVQVGNKTRMSFAKIDEVLEMPDLIEVQKKSYKWFLEEGLREVFREISPIESFTGNLALEFVDYRLENNPKYSVEECKDRDTTYAVPMKVKVRLTNRETGEIKESEVFMGDFPLMTEKGTFIINGAERVIVSQLVRSPGVYYEQQFDKFGKKLISATVIPNRGAWLEYEEDSNDIVYVRIDRTRKVPITVLLRALGYSTDIQILDLLGEEEKLKATLDKDTTKSEEEALIEIYKRLRPGEPPTVESAKSLLYALFFDAKRYDLAKVGRYKFNKKLALKTRIANLKSAKKIVNPVTGEILVEEGEKISKEKAEEIQNCGINVVEVLVEGKVVKVIGNNTVDINKYPMPYDVSSLNIKEAVNLSVLKEILDNFSDEEAVINEIKNRMDELVPKHITKDDIIATISYQLNLTHGIGSIDDIDHLGNRRLRSVGELLQNQFRIGLARLERVVKERMTIQDVNEITPQNLINIRPVVAAIREFFGSSQLSQFMDQTNPLAELTHKRRVSALGPGGLSRERAGFEVRDVHYSHYGRICPIETPEGPNIGLIGSLTTYARVNEYGFIEAPYRRVDKTTGTVTDEIVYMTADEEDEYIIAQANEPLDENNRFINEKVVCRLKEEIIAVPPTEVDFMDVSPKQIVSVATSMIPFLENDDANRALMGSNMQRQAVPLIKPEAPIIGTGIEYKAAVDSGVVVLAKNDGVVEKVAADKVVIRTKDGRRDEYNLLKFKRSNQGTCINQRPIVNEGDEVKKGQVICDGPSTDYGELALGKNVLVGFMPWEGYNYEDAILISEELVRDDSLTSIHIEEYDAEARDTKLGPEEITREIPNVGEDALKDLDERGIIRIGAEVTAGDILVGKVTPKGETELTAEERLLRAIFGEKAREVRDTSLRVPHGESGIVVDVKVYSRENGDELPPGVNQMVRVFVAQKRKISVGDKMAGRHGNKGVISRILPVEDMPFLPDGTPLQICLNPLGVPSRMNIGQVLEVHLGLVAKALGWQIATPVFDGATEEDIQELLAKSGFSPDGKVQLYDGRTGEPFDNKVTVGYMYMLKLHHLVDDKMHARSTGPYSLVTQQPLGGKAQFGGQRFGEMEVWALEAYGAAHTLQEILTVKSDDVSGRVKTYEAIVKGENIPEPGIPESFKVLVKELQSLALDVKVITEDNQEIPLKEFEDDDDSDVPDATLNINIEGREDTPPEEVYEESYEEGFEEEIEELPEDIDFEPDSFDIENDDLDLEDFDI.

Residues 1187–1238 (EGREDTPPEEVYEESYEEGFEEEIEELPEDIDFEPDSFDIENDDLDLEDFDI) are disordered. The segment covering 1193–1238 (PPEEVYEESYEEGFEEEIEELPEDIDFEPDSFDIENDDLDLEDFDI) has biased composition (acidic residues).

It belongs to the RNA polymerase beta chain family. In terms of assembly, the RNAP catalytic core consists of 2 alpha, 1 beta, 1 beta' and 1 omega subunit. When a sigma factor is associated with the core the holoenzyme is formed, which can initiate transcription.

The enzyme catalyses RNA(n) + a ribonucleoside 5'-triphosphate = RNA(n+1) + diphosphate. In terms of biological role, DNA-dependent RNA polymerase catalyzes the transcription of DNA into RNA using the four ribonucleoside triphosphates as substrates. This chain is DNA-directed RNA polymerase subunit beta, found in Thermoanaerobacter pseudethanolicus (strain ATCC 33223 / 39E) (Clostridium thermohydrosulfuricum).